A 326-amino-acid polypeptide reads, in one-letter code: tRNA-dihydrouridine(20a/20b) synthase [NAD(P)+] (326 aa).

FMN is bound by residues 26 to 28 (PMV) and Gln79. Residue Cys108 is the Proton donor of the active site. FMN is bound by residues Lys149, His177, 208–210 (NGD), and 232–233 (AR).

This sequence belongs to the Dus family. Dus4 subfamily. It depends on FMN as a cofactor.

The protein resides in the mitochondrion. It carries out the reaction 5,6-dihydrouridine(20a) in tRNA + NADP(+) = uridine(20a) in tRNA + NADPH + H(+). The enzyme catalyses 5,6-dihydrouridine(20a) in tRNA + NAD(+) = uridine(20a) in tRNA + NADH + H(+). The catalysed reaction is 5,6-dihydrouridine(20b) in tRNA + NAD(+) = uridine(20b) in tRNA + NADH + H(+). It catalyses the reaction 5,6-dihydrouridine(20b) in tRNA + NADP(+) = uridine(20b) in tRNA + NADPH + H(+). It carries out the reaction a 5,6-dihydrouridine in mRNA + NAD(+) = a uridine in mRNA + NADH + H(+). The enzyme catalyses a 5,6-dihydrouridine in mRNA + NADP(+) = a uridine in mRNA + NADPH + H(+). Functionally, catalyzes the synthesis of dihydrouridine, a modified base found in the D-loop of most tRNAs. Also able to mediate dihydrouridylation of some mRNAs, thereby affecting their translation. The polypeptide is tRNA-dihydrouridine(20a/20b) synthase [NAD(P)+] (Schizosaccharomyces pombe (strain 972 / ATCC 24843) (Fission yeast)).